Reading from the N-terminus, the 234-residue chain is MKNMLLLSSSKYKNTGYLEHTLPWLQNFLADYRGKTIAFVPYAGVRRTFDEYEKTVQNALSYLEMNIVSVHHGKQHRDIIEQADVIAIGGGNTFCLLKQLYEHNLIDIIREKVNNSTPYFGWSAGANVVGASIMTTNDMPITYPPSFQALQLFPHQINPHFISGKMQGHNGESREERLAEFLLVNPTALVYALPEGSALHIQNEMATVLGENPILCFSENMECGTFDINTTFSY.

Active-site charge relay system residues include S123, D138, and H160.

Belongs to the peptidase S51 family.

It is found in the cytoplasm. It carries out the reaction Dipeptidase E catalyzes the hydrolysis of dipeptides Asp-|-Xaa. It does not act on peptides with N-terminal Glu, Asn or Gln, nor does it cleave isoaspartyl peptides.. Its function is as follows. Hydrolyzes dipeptides containing N-terminal aspartate residues. May play a role in allowing the cell to use peptide aspartate to spare carbon otherwise required for the synthesis of the aspartate family of amino acids. The chain is Peptidase E from Haemophilus influenzae (strain PittGG).